A 175-amino-acid chain; its full sequence is Pathogenesis-related protein 1A1 (175 aa).

The signal sequence occupies residues 1–21 (MKSSIFVACFITFIIFHSSQA). In terms of domain architecture, SCP spans 29–146 (LNAHNAARRR…SGWVFITCNY (118 aa)). Intrachain disulfides connect cysteine 65–cysteine 135, cysteine 108–cysteine 114, and cysteine 130–cysteine 144.

The protein belongs to the CRISP family.

Functionally, probably involved in the defense reaction of plants against pathogens. The chain is Pathogenesis-related protein 1A1 from Solanum lycopersicum (Tomato).